The primary structure comprises 258 residues: Imidazole glycerol phosphate synthase subunit HisF (258 aa).

Catalysis depends on residues Asp-11 and Asp-130.

This sequence belongs to the HisA/HisF family. Heterodimer of HisH and HisF.

It localises to the cytoplasm. It catalyses the reaction 5-[(5-phospho-1-deoxy-D-ribulos-1-ylimino)methylamino]-1-(5-phospho-beta-D-ribosyl)imidazole-4-carboxamide + L-glutamine = D-erythro-1-(imidazol-4-yl)glycerol 3-phosphate + 5-amino-1-(5-phospho-beta-D-ribosyl)imidazole-4-carboxamide + L-glutamate + H(+). It participates in amino-acid biosynthesis; L-histidine biosynthesis; L-histidine from 5-phospho-alpha-D-ribose 1-diphosphate: step 5/9. In terms of biological role, IGPS catalyzes the conversion of PRFAR and glutamine to IGP, AICAR and glutamate. The HisF subunit catalyzes the cyclization activity that produces IGP and AICAR from PRFAR using the ammonia provided by the HisH subunit. The polypeptide is Imidazole glycerol phosphate synthase subunit HisF (Nitrobacter hamburgensis (strain DSM 10229 / NCIMB 13809 / X14)).